A 389-amino-acid polypeptide reads, in one-letter code: Phospholipid phosphatase-related protein type 2 (389 aa).

2 helical membrane-spanning segments follow: residues 14–34 (IIPC…AFFP) and 66–86 (FLGV…AGQV). Asn-102 carries N-linked (GlcNAc...) asparagine glycosylation. 3 consecutive transmembrane segments (helical) span residues 147–167 (AALC…VFRV), 176–196 (SLCL…VAEY), and 203–223 (VLAG…CVVH). Residues Ser-236 and Ser-249 each carry the phosphoserine modification. Disordered regions lie at residues 255–280 (SVAQ…PQNC) and 295–351 (APAM…GRKL). A compositionally biased stretch (polar residues) spans 265–278 (SHSTPARLTPSKPQ). Residues 314–339 (TPLPLPLPLPAPAPSQGPSPSSPGPG) are compositionally biased toward pro residues.

This sequence belongs to the PA-phosphatase related phosphoesterase family.

It localises to the membrane. The chain is Phospholipid phosphatase-related protein type 2 from Bos taurus (Bovine).